The chain runs to 135 residues: S-adenosylmethionine decarboxylase proenzyme (135 aa).

The active-site Schiff-base intermediate with substrate; via pyruvic acid is Ser-63. Position 63 is a pyruvic acid (Ser); by autocatalysis (Ser-63). The active-site Proton acceptor; for processing activity is His-68. The active-site Proton donor; for catalytic activity is the Cys-83.

The protein belongs to the prokaryotic AdoMetDC family. Type 1 subfamily. As to quaternary structure, heterotetramer of two alpha and two beta chains arranged as a dimer of alpha/beta heterodimers. It depends on pyruvate as a cofactor. In terms of processing, is synthesized initially as an inactive proenzyme. Formation of the active enzyme involves a self-maturation process in which the active site pyruvoyl group is generated from an internal serine residue via an autocatalytic post-translational modification. Two non-identical subunits are generated from the proenzyme in this reaction, and the pyruvate is formed at the N-terminus of the alpha chain, which is derived from the carboxyl end of the proenzyme. The post-translation cleavage follows an unusual pathway, termed non-hydrolytic serinolysis, in which the side chain hydroxyl group of the serine supplies its oxygen atom to form the C-terminus of the beta chain, while the remainder of the serine residue undergoes an oxidative deamination to produce ammonia and the pyruvoyl group blocking the N-terminus of the alpha chain.

It catalyses the reaction S-adenosyl-L-methionine + H(+) = S-adenosyl 3-(methylsulfanyl)propylamine + CO2. It functions in the pathway amine and polyamine biosynthesis; S-adenosylmethioninamine biosynthesis; S-adenosylmethioninamine from S-adenosyl-L-methionine: step 1/1. In terms of biological role, catalyzes the decarboxylation of S-adenosylmethionine to S-adenosylmethioninamine (dcAdoMet), the propylamine donor required for the synthesis of the polyamines spermine and spermidine from the diamine putrescine. This is S-adenosylmethionine decarboxylase proenzyme from Thermodesulfovibrio yellowstonii (strain ATCC 51303 / DSM 11347 / YP87).